The following is a 366-amino-acid chain: Transcription factor IIIA (366 aa).

9 consecutive C2H2-type zinc fingers follow at residues 35 to 59 (YICS…LCKH), 65 to 89 (FPCK…SLTH), 95 to 120 (FTCD…NRFH), 127 to 151 (YVCH…QFSH), 157 to 181 (YECP…EKVH), 184 to 210 (YPCK…AECH), 214 to 236 (AVCD…QKTH), 243 to 268 (YLCP…QSFH), and 274 to 298 (FVCE…SVVH). At Ser-38 the chain carries Phosphoserine; by CK2. The segment covering 299-310 (DPEKRKLKEKCP) has biased composition (basic and acidic residues). The segment at 299–366 (DPEKRKLKEK…SLVLDKLTIQ (68 aa)) is disordered. The residue at position 336 (Ser-336) is a Phosphoserine; by CK2; in vitro.

In terms of processing, the N-terminus is blocked. In terms of tissue distribution, synthesized in oocytes and, in much lower levels, in somatic cells.

The protein resides in the nucleus. Involved in ribosomal large subunit biogenesis. Acts both as a positive transcription factor for 5S RNA genes, and as a specific RNA binding protein that complexes with 5S RNA in oocytes to form the 7S ribonucleoprotein storage particle. May play an essential role in the developmental change in 5S RNA gene expression. Interacts with the internal control region (ICR) of approximately 50 bases within the 5S RNA genes, is required for correct transcription of these genes by RNA polymerase III. Also binds the transcribed 5S RNA's. The sequence is that of Transcription factor IIIA (gtf3a) from Xenopus laevis (African clawed frog).